Consider the following 307-residue polypeptide: Oxygen-dependent coproporphyrinogen-III oxidase (307 aa).

Substrate is bound at residue serine 99. A divalent metal cation contacts are provided by histidine 103 and histidine 113. Histidine 113 acts as the Proton donor in catalysis. A substrate-binding site is contributed by 115–117; that stretch reads NVR. Histidine 152 and histidine 182 together coordinate a divalent metal cation. Residues 247–282 form an important for dimerization region; that stretch reads YVEFNLVFDRGTLFGLQSGGRTESILMSMPPVVNWR. 265–267 contacts substrate; it reads GGR.

It belongs to the aerobic coproporphyrinogen-III oxidase family. Homodimer. A divalent metal cation serves as cofactor.

Its subcellular location is the cytoplasm. It catalyses the reaction coproporphyrinogen III + O2 + 2 H(+) = protoporphyrinogen IX + 2 CO2 + 2 H2O. It functions in the pathway porphyrin-containing compound metabolism; protoporphyrin-IX biosynthesis; protoporphyrinogen-IX from coproporphyrinogen-III (O2 route): step 1/1. In terms of biological role, involved in the heme biosynthesis. Catalyzes the aerobic oxidative decarboxylation of propionate groups of rings A and B of coproporphyrinogen-III to yield the vinyl groups in protoporphyrinogen-IX. This Paraburkholderia phytofirmans (strain DSM 17436 / LMG 22146 / PsJN) (Burkholderia phytofirmans) protein is Oxygen-dependent coproporphyrinogen-III oxidase.